Consider the following 232-residue polypeptide: LexA repressor (232 aa).

The segment at residues Ile36–Lys56 is a DNA-binding region (H-T-H motif). Over residues Gly62–Thr86 the composition is skewed to basic and acidic residues. A disordered region spans residues Gly62–Ala107. Residues Ser156 and Lys193 each act as for autocatalytic cleavage activity in the active site.

This sequence belongs to the peptidase S24 family. Homodimer.

It catalyses the reaction Hydrolysis of Ala-|-Gly bond in repressor LexA.. Functionally, represses a number of genes involved in the response to DNA damage (SOS response), including recA and lexA. In the presence of single-stranded DNA, RecA interacts with LexA causing an autocatalytic cleavage which disrupts the DNA-binding part of LexA, leading to derepression of the SOS regulon and eventually DNA repair. The protein is LexA repressor of Corynebacterium efficiens (strain DSM 44549 / YS-314 / AJ 12310 / JCM 11189 / NBRC 100395).